The primary structure comprises 140 residues: Large-conductance mechanosensitive channel (140 aa).

2 helical membrane-spanning segments follow: residues 9 to 29 (AFALKGNVVDLAVGVIIGAAF) and 86 to 106 (GSFLTIVLNFLILAFIIFLMV).

This sequence belongs to the MscL family. As to quaternary structure, homopentamer.

The protein localises to the cell inner membrane. Channel that opens in response to stretch forces in the membrane lipid bilayer. May participate in the regulation of osmotic pressure changes within the cell. The protein is Large-conductance mechanosensitive channel of Anaeromyxobacter dehalogenans (strain 2CP-1 / ATCC BAA-258).